Reading from the N-terminus, the 160-residue chain is Ribonuclease H (160 aa).

The 142-residue stretch at 5 to 146 (PGGLVEIWTD…VDQLATAARE (142 aa)) folds into the RNase H type-1 domain. Positions 14, 52, 74, and 138 each coordinate Mg(2+).

It belongs to the RNase H family. Monomer. Requires Mg(2+) as cofactor.

The protein localises to the cytoplasm. It carries out the reaction Endonucleolytic cleavage to 5'-phosphomonoester.. In terms of biological role, endonuclease that specifically degrades the RNA of RNA-DNA hybrids. This Acidiphilium cryptum (strain JF-5) protein is Ribonuclease H.